Here is a 35-residue protein sequence, read N- to C-terminus: MSDINGTRLPIPGLIPLGIPCVSDDVNPTLTRGER.

Residues 1-10 constitute a propeptide that is removed on maturation; it reads MSDINGTRLP. A cross-link (cyclopeptide (Ile-Pro)) is located at residues 11–20; it reads IPGLIPLGIP. A propeptide spanning residues 21 to 35 is cleaved from the precursor; that stretch reads CVSDDVNPTLTRGER.

The protein belongs to the MSDIN fungal toxin family. Processed by the macrocyclase-peptidase enzyme POPB to yield a toxic cyclic decapeptide. POPB first removes 10 residues from the N-terminus. Conformational trapping of the remaining peptide forces the enzyme to release this intermediate rather than proceed to macrocyclization. The enzyme rebinds the remaining peptide in a different conformation and catalyzes macrocyclization of the N-terminal 10 residues.

Its function is as follows. Probable toxin that belongs to the MSDIN-like toxin family responsible for a large number of food poisoning cases and deaths. The polypeptide is MSDIN-like toxin proprotein 6 (Amanita bisporigera (Destroying angel)).